The following is an 88-amino-acid chain: Chaplin-F (88 aa).

The first 36 residues, 1-36 (MYNPKEHFSMSRIAKGLALTSVAAAAVAGTAGVAAA), serve as a signal peptide directing secretion. Residues 47–87 (SPGVLSGNVVQVPVHIPVNVCGNTIDVIGLLNPAFGNECEN) form the Chaplin domain. The cysteines at positions 67 and 85 are disulfide-linked.

The protein belongs to the chaplin family. Short chaplin subfamily. In terms of assembly, homodimer; disulfide linked. About 20% of ChpF isolated from cell wall forms disulfide-bonded homodimers.

The protein resides in the cell surface. The protein localises to the secreted. Its subcellular location is the cell wall. It localises to the fimbrium. In terms of biological role, one of 8 partially redundant surface-active proteins required for efficient formation of aerial mycelium; the short chaplins assemble into a hydrophobic, amyloidal fibrillar surface layer that envelopes and protects aerial hyphae and spores, presumably anchored to the long chaplins. Chaplins have an overlapping function with the surface-active SapB peptide; chaplins are essential on minimal medium while on rich medium both chaplins and SapB are required for efficient aerial hyphae formation. Chaplins are also involved in cell attachment to a hydrophobic surface. Forms amyloid fibrils in vitro probably composed of stacked beta-sheets, at low extracellular concentrations individually restores the ability to form aerial hyphae to a chaplin-deficient strain. A small chaplin extract (ChpD, ChpE, ChpF, ChpG and ChpH) self-assembles into 2 different amyloids; small fibrils at the air-water interface form an amphipathic membrane that resembles spore-surface structures involved in aerial hyphae formation, and hydrophilic fibrils in solution that resemble the fibers that attach cells to a hydrophobic surface. At the air-water interface the hydrophilic surface is in contact with water (probably equivalent to the peptidoglycan layer), while the hydrophobic face is exposed to the air, making the surface of the aerial hyphae hydrophobic. A small chaplin extract applied to a chaplin-deficient strain restores aerial hyphae formation. The small chaplin extract forms an amyloid-like structure similar to that seen on the surface of cells without rodlets (rdlA-rdlB deletions), and is highly surface active, reducing surface tension from 72 to 26 mJ/m(2), which probably allows escape of hyphae from an aqueous environment into air. ChpF alone is less surface active at pH 3.0 than at pH 10.0, it reduces the surface tension of water from 72.8 mN/m to 50 mN/m at pH 3.0 or to 37 mN/m at pH 10.0. ChpF and ChpG are sufficient to restore the rodlet layer and hydrophobicity to a strain deleted for the other 6 chaplin genes. This is Chaplin-F from Streptomyces coelicolor (strain ATCC BAA-471 / A3(2) / M145).